The primary structure comprises 235 residues: Ribosomal RNA small subunit methyltransferase G (235 aa).

Residues glycine 98, methionine 103, valine 149–glutamate 150, and arginine 164 each bind S-adenosyl-L-methionine.

This sequence belongs to the methyltransferase superfamily. RNA methyltransferase RsmG family.

The protein localises to the cytoplasm. The catalysed reaction is guanosine(527) in 16S rRNA + S-adenosyl-L-methionine = N(7)-methylguanosine(527) in 16S rRNA + S-adenosyl-L-homocysteine. Functionally, specifically methylates the N7 position of guanine in position 527 of 16S rRNA. The polypeptide is Ribosomal RNA small subunit methyltransferase G (Cupriavidus metallidurans (strain ATCC 43123 / DSM 2839 / NBRC 102507 / CH34) (Ralstonia metallidurans)).